A 275-amino-acid polypeptide reads, in one-letter code: 3-methyl-2-oxobutanoate hydroxymethyltransferase (275 aa).

Mg(2+) contacts are provided by aspartate 49 and aspartate 88. 3-methyl-2-oxobutanoate-binding positions include 49-50 (DS), aspartate 88, and lysine 118. Glutamate 120 lines the Mg(2+) pocket. Glutamate 187 acts as the Proton acceptor in catalysis.

It belongs to the PanB family. In terms of assembly, homodecamer; pentamer of dimers. Mg(2+) serves as cofactor.

Its subcellular location is the cytoplasm. The enzyme catalyses 3-methyl-2-oxobutanoate + (6R)-5,10-methylene-5,6,7,8-tetrahydrofolate + H2O = 2-dehydropantoate + (6S)-5,6,7,8-tetrahydrofolate. The protein operates within cofactor biosynthesis; (R)-pantothenate biosynthesis; (R)-pantoate from 3-methyl-2-oxobutanoate: step 1/2. In terms of biological role, catalyzes the reversible reaction in which hydroxymethyl group from 5,10-methylenetetrahydrofolate is transferred onto alpha-ketoisovalerate to form ketopantoate. This is 3-methyl-2-oxobutanoate hydroxymethyltransferase from Nitrobacter hamburgensis (strain DSM 10229 / NCIMB 13809 / X14).